Here is a 332-residue protein sequence, read N- to C-terminus: Stage II sporulation protein B (332 aa).

Positions 1-10 (MKKRKNKKNS) are enriched in basic residues. Positions 1–71 (MKKRKNKKNS…EHPDEDEFNW (71 aa)) are disordered. The segment covering 11–27 (KAAEKALKVTINGKEET) has biased composition (basic and acidic residues). The chain crosses the membrane as a helical span at residues 112–132 (AATIAFAAVIGTGLGLFALNI). Positions 139–174 (SAPASLEDSLGSQTAKAGDTSADKQTSGAEKQAAQT) are disordered. A compositionally biased stretch (polar residues) spans 161–174 (DKQTSGAEKQAAQT). The SPOR domain maps to 175-250 (EGTYKTYAVQ…SDFEAWGGKE (76 aa)).

Its subcellular location is the cell membrane. Appears to be degraded early in engulfment, in correlation with its loss from polar septa. In terms of biological role, facilitates the rapid and spatially regulated dissolution of septal peptidoglycan. The chain is Stage II sporulation protein B from Bacillus subtilis (strain 168).